We begin with the raw amino-acid sequence, 248 residues long: Fasciclin-like arabinogalactan protein 19 (248 aa).

The N-terminal stretch at 1-29 (MAKISSASCFRAIFLGALIILCLPHPSTG) is a signal peptide. The 132-residue stretch at 35 to 166 (LERAIAILRV…IAVHGLADLL (132 aa)) folds into the FAS1 domain. N-linked (GlcNAc...) asparagine glycosylation is found at N114 and N136. Over residues 213-226 (SPSVEEVSPSPSWG) the composition is skewed to low complexity. The disordered stretch occupies residues 213–248 (SPSVEEVSPSPSWGEGEEDFIVGDEGGPLDGRNNGF).

The protein belongs to the fasciclin-like AGP family.

Its subcellular location is the secreted. In terms of biological role, may be a cell surface adhesion protein. The chain is Fasciclin-like arabinogalactan protein 19 (FLA19) from Arabidopsis thaliana (Mouse-ear cress).